The following is a 319-amino-acid chain: Acetyl-coenzyme A carboxylase carboxyl transferase subunit alpha (319 aa).

The CoA carboxyltransferase C-terminal domain occupies 35 to 296 (DLDKELEQLE…KATLLRQLAD (262 aa)).

Belongs to the AccA family. In terms of assembly, acetyl-CoA carboxylase is a heterohexamer composed of biotin carboxyl carrier protein (AccB), biotin carboxylase (AccC) and two subunits each of ACCase subunit alpha (AccA) and ACCase subunit beta (AccD).

Its subcellular location is the cytoplasm. The catalysed reaction is N(6)-carboxybiotinyl-L-lysyl-[protein] + acetyl-CoA = N(6)-biotinyl-L-lysyl-[protein] + malonyl-CoA. The protein operates within lipid metabolism; malonyl-CoA biosynthesis; malonyl-CoA from acetyl-CoA: step 1/1. In terms of biological role, component of the acetyl coenzyme A carboxylase (ACC) complex. First, biotin carboxylase catalyzes the carboxylation of biotin on its carrier protein (BCCP) and then the CO(2) group is transferred by the carboxyltransferase to acetyl-CoA to form malonyl-CoA. The protein is Acetyl-coenzyme A carboxylase carboxyl transferase subunit alpha of Vibrio cholerae serotype O1 (strain ATCC 39541 / Classical Ogawa 395 / O395).